The primary structure comprises 378 residues: Chaperone protein DnaJ (378 aa).

The region spanning 5 to 69 (EYYDRLGVSK…QKRAAYDQYG (65 aa)) is the J domain. The CR-type zinc-finger motif lies at 134 to 216 (GVEKEVSYNR…CHGTGHEKQA (83 aa)). Zn(2+) is bound by residues C147, C150, C164, C167, C190, C193, C204, and C207. CXXCXGXG motif repeat units lie at residues 147–154 (CGTCLGSG), 164–171 (CRKCHGSG), 190–197 (CDICHGSG), and 204–211 (CQTCHGTG).

It belongs to the DnaJ family. Homodimer. The cofactor is Zn(2+).

It localises to the cytoplasm. Participates actively in the response to hyperosmotic and heat shock by preventing the aggregation of stress-denatured proteins and by disaggregating proteins, also in an autonomous, DnaK-independent fashion. Unfolded proteins bind initially to DnaJ; upon interaction with the DnaJ-bound protein, DnaK hydrolyzes its bound ATP, resulting in the formation of a stable complex. GrpE releases ADP from DnaK; ATP binding to DnaK triggers the release of the substrate protein, thus completing the reaction cycle. Several rounds of ATP-dependent interactions between DnaJ, DnaK and GrpE are required for fully efficient folding. Also involved, together with DnaK and GrpE, in the DNA replication of plasmids through activation of initiation proteins. This Streptococcus pyogenes serotype M1 protein is Chaperone protein DnaJ.